The sequence spans 154 residues: MTPKLVIYTDGACRGNPGPGGWGALLMYGDKKKEIMGGDLATTNNRMELMAAIQALEALNKPTKAELHTDSQYVMKGVTQWIHGWKAKGWKTADKSPVKNVDLWQRLDAARARHEVDWRWVKGHAGHVHNERADELARLGMLKTLGERGSGKAV.

Positions 1 to 142 (MTPKLVIYTD…ADELARLGML (142 aa)) constitute an RNase H type-1 domain. Aspartate 10, glutamate 48, aspartate 70, and aspartate 134 together coordinate Mg(2+).

This sequence belongs to the RNase H family. Monomer. The cofactor is Mg(2+).

Its subcellular location is the cytoplasm. The catalysed reaction is Endonucleolytic cleavage to 5'-phosphomonoester.. Endonuclease that specifically degrades the RNA of RNA-DNA hybrids. This is Ribonuclease H from Caulobacter sp. (strain K31).